The following is a 185-amino-acid chain: Tetratricopeptide repeat protein 36 homolog (185 aa).

3 TPR repeats span residues 53–86 (SREL…AQRA), 88–119 (VLNN…ASDQ), and 125–158 (CHAH…GSKF).

It belongs to the TTC36 family.

The polypeptide is Tetratricopeptide repeat protein 36 homolog (Drosophila pseudoobscura pseudoobscura (Fruit fly)).